Reading from the N-terminus, the 128-residue chain is RYamide neuropeptides (128 aa).

The N-terminal stretch at 1–23 is a signal peptide; it reads MHARKLIVVLVYILTVLVSVAVS. Positions 26–29 are excised as a propeptide; the sequence is YTSE. A Tyrosine amide modification is found at Tyr44. The propeptide occupies 47-63; sequence GGPSPNNKENKVNIRPR. Tyrosine amide is present on Tyr73. The propeptide occupies 77 to 128; it reads SGWSPNASLVYPVSTPLCGLDEDLSCAYTGISDLYRCTPRKGESEEFTTSSN.

It is found in the secreted. Functionally, neuropeptides RYamide-1 and RYamide-2 are ligands for the G-protein coupled receptor RYa-R. RYamide-2 is the most potent activator of RYa-R. This chain is RYamide neuropeptides, found in Tribolium castaneum (Red flour beetle).